The primary structure comprises 91 residues: Large ribosomal subunit protein eL31 (91 aa).

The protein belongs to the eukaryotic ribosomal protein eL31 family.

In Pyrobaculum neutrophilum (strain DSM 2338 / JCM 9278 / NBRC 100436 / V24Sta) (Thermoproteus neutrophilus), this protein is Large ribosomal subunit protein eL31.